Here is a 352-residue protein sequence, read N- to C-terminus: Invasion chromosome antigen T (352 aa).

The protein belongs to the IcaT/YfdF family.

Its subcellular location is the secreted. Functionally, may contribute to pathogenesis, although some of its characteristics suggest it is a fossil gene. The sequence is that of Invasion chromosome antigen T from Shigella flexneri serotype 5a (strain M90T).